Consider the following 592-residue polypeptide: Putative nucleoside-triphosphatase (592 aa).

Glu200 functions as the Proton acceptor in the catalytic mechanism.

The protein belongs to the GDA1/CD39 NTPase family.

It catalyses the reaction a ribonucleoside 5'-triphosphate + H2O = a ribonucleoside 5'-diphosphate + phosphate + H(+). This chain is Putative nucleoside-triphosphatase (NTP4), found in Toxoplasma gondii.